We begin with the raw amino-acid sequence, 60 residues long: uncharacterized protein (60 aa).

This is an uncharacterized protein from Emericella nidulans (strain FGSC A4 / ATCC 38163 / CBS 112.46 / NRRL 194 / M139) (Aspergillus nidulans).